The following is a 344-amino-acid chain: Fructose-bisphosphate aldolase (344 aa).

Ser-53 is a binding site for D-glyceraldehyde 3-phosphate. Asp-95 (proton donor) is an active-site residue. The Zn(2+) site is built by His-96, Asp-131, Glu-161, and His-212. Gly-213 serves as a coordination point for dihydroxyacetone phosphate. His-252 lines the Zn(2+) pocket. Dihydroxyacetone phosphate is bound by residues 253-255 (GGS) and 274-277 (NVDT).

Belongs to the class II fructose-bisphosphate aldolase family. Requires Zn(2+) as cofactor.

It carries out the reaction beta-D-fructose 1,6-bisphosphate = D-glyceraldehyde 3-phosphate + dihydroxyacetone phosphate. Its pathway is carbohydrate degradation; glycolysis; D-glyceraldehyde 3-phosphate and glycerone phosphate from D-glucose: step 4/4. Catalyzes the aldol condensation of dihydroxyacetone phosphate (DHAP or glycerone-phosphate) with glyceraldehyde 3-phosphate (G3P) to form fructose 1,6-bisphosphate (FBP) in gluconeogenesis and the reverse reaction in glycolysis. The polypeptide is Fructose-bisphosphate aldolase (fba) (Corynebacterium glutamicum (strain ATCC 13032 / DSM 20300 / JCM 1318 / BCRC 11384 / CCUG 27702 / LMG 3730 / NBRC 12168 / NCIMB 10025 / NRRL B-2784 / 534)).